The following is a 183-amino-acid chain: Dermatopontin (183 aa).

Glutamine 1 is subject to Pyrrolidone carboxylic acid. Sulfotyrosine is present on tyrosine 5. Repeat copies occupy residues 8 to 61 (PYQQ…ACMP), 52 to 57 (DRQWNY), 62 to 117 (TPQS…CCRY), and 107 to 112 (DREWQF). The interval 8–117 (PYQQYHDYSD…REWQFYCCRY (110 aa)) is 2 X 53-55 AA tandem repeats. 5 disulfide bridges follow: cysteine 32–cysteine 59, cysteine 72–cysteine 114, cysteine 88–cysteine 115, cysteine 121–cysteine 178, and cysteine 125–cysteine 171. Residues 52–168 (DRQWNYACMP…AVERDRQWKF (117 aa)) form a 3 X 6 AA tandem repeats of D-R-[EQ]-W-[NQK]-[FY] region. Sulfotyrosine occurs at positions 144, 146, 148, and 149. The 2-3 repeat unit spans residues 163–168 (DRQWKF). Tyrosine 176 bears the Sulfotyrosine mark.

The protein belongs to the dermatopontin family. Interacts with TGFB1, DCN and collagen. Sulfated on tyrosine residue(s). In terms of tissue distribution, detected in skin, skeletal muscle, heart, lung, articular cartilage, long bone and calvaria. Smaller amounts detected in kidney. Not detected in brain, liver or spleen.

The protein resides in the secreted. Its subcellular location is the extracellular space. It is found in the extracellular matrix. Its function is as follows. Seems to mediate adhesion by cell surface integrin binding. May serve as a communication link between the dermal fibroblast cell surface and its extracellular matrix environment. Enhances TGFB1 activity. Inhibits cell proliferation. Accelerates collagen fibril formation, and stabilizes collagen fibrils against low-temperature dissociation. This Sus scrofa (Pig) protein is Dermatopontin (DPT).